A 290-amino-acid polypeptide reads, in one-letter code: Chloride intracellular channel exc-4 (290 aa).

Residues 37–57 (LFCQEFWMELYALYEIGVARV) traverse the membrane as a helical segment.

It belongs to the chloride channel CLIC family. Monomer. As to expression, expressed in the secretory system, hypodermis, vulva, pharyngeal muscle, rectal gland, tubular rectal epithelium cells, and tubular neuronal support cells in the head and tail.

Its subcellular location is the cytoplasm. It localises to the membrane. In terms of biological role, may insert into membranes and form chloride ion channels. Involved in the formation of the excretory canal. Required to prevent cystic lumenal expansions in the excretory cell. Not required for formation of the initial tube, but is required for regulating the size of the tube lumen as it grows. In Caenorhabditis elegans, this protein is Chloride intracellular channel exc-4 (exc-4).